The following is a 258-amino-acid chain: NAD kinase (258 aa).

Aspartate 51 (proton acceptor) is an active-site residue. Residues 51 to 52 (DG), arginine 56, 119 to 120 (ND), lysine 130, aspartate 149, 160 to 165 (TAYSLS), and alanine 184 contribute to the NAD(+) site.

It belongs to the NAD kinase family. A divalent metal cation is required as a cofactor.

It is found in the cytoplasm. It carries out the reaction NAD(+) + ATP = ADP + NADP(+) + H(+). In terms of biological role, involved in the regulation of the intracellular balance of NAD and NADP, and is a key enzyme in the biosynthesis of NADP. Catalyzes specifically the phosphorylation on 2'-hydroxyl of the adenosine moiety of NAD to yield NADP. This Thermotoga neapolitana (strain ATCC 49049 / DSM 4359 / NBRC 107923 / NS-E) protein is NAD kinase.